The following is a 92-amino-acid chain: uncharacterized protein (92 aa).

One can recognise an HMA domain in the interval 24–89; that stretch reads KQIVLKVKEM…AIHKLKYTAE (66 aa). Residues Cys35 and Cys38 each contribute to the a metal cation site.

This is an uncharacterized protein from Haemophilus influenzae (strain ATCC 51907 / DSM 11121 / KW20 / Rd).